The chain runs to 264 residues: Catenin delta-2 (264 aa).

ARM repeat units lie at residues Asn20 to Tyr59, Asp64 to Ser104, Leu120 to Ser162, and Glu166 to Tyr211. The interval Gly238–Gly264 is disordered.

It belongs to the beta-catenin family. In terms of assembly, binds to E-cadherin at a juxtamembrane site within the cytoplasmic domain. Binds to PSEN1. Interacts with ZBTB33. Interacts with ARHGEF28. Interacts (via the extreme C-terminus) with FRMPD2 (via the PDZ 2 domain). Interacts with PDZD2. Interacts with CDK5. Interacts with CTNBB1. Interacts with GSK3A and GSK3B. Interacts with DNM2. Interacts with CCDC85B. Post-translationally, O-glycosylated. In terms of processing, phosphorylated by CDK5. Phosphorylated by GSK3B. In terms of tissue distribution, predominantly expressed in brain; accumulates in cortical neurons (at protein level).

It localises to the nucleus. Its subcellular location is the cell junction. The protein localises to the adherens junction. It is found in the cell projection. The protein resides in the dendrite. It localises to the perikaryon. Has a critical role in neuronal development, particularly in the formation and/or maintenance of dendritic spines and synapses. Involved in the regulation of canonical Wnt signaling. It probably acts on beta-catenin turnover, facilitating beta-catenin interaction with GSK3B, phosphorylation, ubiquitination and degradation. May be involved in neuronal cell adhesion and tissue morphogenesis and integrity by regulating adhesion molecules. Functions as a transcriptional activator when bound to ZBTB33. This chain is Catenin delta-2 (Ctnnd2), found in Rattus norvegicus (Rat).